Consider the following 420-residue polypeptide: Vitellogenin-3 (420 aa).

Residues 1 to 19 (MMSLRICLLATCLLVAAHA) form the signal peptide. Thr37 is modified (phosphothreonine). A phosphoserine mark is found at Ser177 and Ser178. A sulfotyrosine mark is found at Tyr384 and Tyr390. Residues 401–420 (GQRSPAHKQAAYHGMHHAQN) form a disordered region.

Belongs to the AB hydrolase superfamily. Lipase family. Tyrosine sulfation occurs in the female only and plays an essential functional role. As to expression, synthesized in the fat body and ovarian follicle cells and accumulate in the oocyte.

It localises to the secreted. Its function is as follows. Vitellogenin is the major yolk protein of eggs where it is used as a food source during embryogenesis. Vitellogenins and their receptor yl/yolkless are required for maintenance of microtubule plus-end orientation towards the posterior pole of oocytes. Involved in polarized localization of germ plasm components, such as osk mRNA and vas protein, to the oocyte posterior cortex. Receptor-mediated endocytosis by yl/yolkless is crucial for actin reorganization, mediated by osk isoform A/Long, required to anchor germ plasm components to the oocyte cortex. The protein is Vitellogenin-3 (Yp3) of Drosophila melanogaster (Fruit fly).